Reading from the N-terminus, the 325-residue chain is MDARRKHWKENMFTPFFSAQDVLEETSEPESSSEQTTADSSKGMEEIYNLSSRKFQEESKFKRKKYIFQLNEIEQEQNLRENKRNISKNETDTNSASYESSNVDVTTEESFNSTEDNSTCSTDNLPALLRQDIRKKFMERMSPKLCLNLLNEELEELNMKYRKIEEEFENAEKELLHYKKEIFTKPLNFQETETDASKSDYELQALRNDLSEKATNVKNLSEQLQQAKEVIHKLNLENRNLKEAVRKLKHQTEVGNVLLKEEMKSYYELEMAKIRGELSVIKNELRTEKTLQARNNRALELLRKYYASSMVTSSSILDHFTGDFF.

2 disordered regions span residues 18–45 (SAQD…KGME) and 81–123 (ENKR…CSTD). Positions 81–91 (ENKRNISKNET) are enriched in basic and acidic residues. Residues 92–123 (DTNSASYESSNVDVTTEESFNSTEDNSTCSTD) are compositionally biased toward polar residues. A coiled-coil region spans residues 144–288 (KLCLNLLNEE…SVIKNELRTE (145 aa)).

It belongs to the CCDC160 family.

The sequence is that of Coiled-coil domain-containing protein 160 (CCDC160) from Homo sapiens (Human).